The chain runs to 303 residues: Pyridoxal 5'-phosphate synthase subunit PdxS (303 aa).

Aspartate 33 contacts D-ribose 5-phosphate. Lysine 90 functions as the Schiff-base intermediate with D-ribose 5-phosphate in the catalytic mechanism. Glycine 162 serves as a coordination point for D-ribose 5-phosphate. D-glyceraldehyde 3-phosphate is bound at residue arginine 174. Residues glycine 223 and 244–245 (GS) each bind D-ribose 5-phosphate.

It belongs to the PdxS/SNZ family. In the presence of PdxT, forms a dodecamer of heterodimers.

It carries out the reaction aldehydo-D-ribose 5-phosphate + D-glyceraldehyde 3-phosphate + L-glutamine = pyridoxal 5'-phosphate + L-glutamate + phosphate + 3 H2O + H(+). The protein operates within cofactor biosynthesis; pyridoxal 5'-phosphate biosynthesis. Its function is as follows. Catalyzes the formation of pyridoxal 5'-phosphate from ribose 5-phosphate (RBP), glyceraldehyde 3-phosphate (G3P) and ammonia. The ammonia is provided by the PdxT subunit. Can also use ribulose 5-phosphate and dihydroxyacetone phosphate as substrates, resulting from enzyme-catalyzed isomerization of RBP and G3P, respectively. This Streptomyces coelicolor (strain ATCC BAA-471 / A3(2) / M145) protein is Pyridoxal 5'-phosphate synthase subunit PdxS.